A 454-amino-acid chain; its full sequence is OTU domain-containing protein 1 (454 aa).

2 disordered regions span residues 36 to 64 and 116 to 257; these read QSAS…REAA and LPPP…SRAD. Residues 52 to 64 show a composition bias toward low complexity; sequence RPPAAATEPREAA. Pro residues predominate over residues 116-125; it reads LPPPSAPSPP. Basic and acidic residues-rich tracts occupy residues 151–164, 193–210, and 219–229; these read DAPD…EHRQ, GEER…RASG, and ALRRQDPEAEA. The region spanning 282-411 is the OTU domain; the sequence is KYRFHIIPDG…NGHYDAVFDH (130 aa). A cys-loop region spans residues 287–293; sequence IIPDGNC. Residue D290 is part of the active site. Catalysis depends on C293, which acts as the Nucleophile. Residues 342–352 form a his-loop region; sequence AAQDGAWAGYP. A variable-loop region spans residues 399–404; it reads WLSNGH. The active site involves H404. The UIM domain maps to 430–449; that stretch reads KRDEELAKSMAISLSKMYIE.

It catalyses the reaction Thiol-dependent hydrolysis of ester, thioester, amide, peptide and isopeptide bonds formed by the C-terminal Gly of ubiquitin (a 76-residue protein attached to proteins as an intracellular targeting signal).. Functionally, deubiquitinating enzyme that specifically hydrolyzes 'Lys-63'-linked polyubiquitin to monoubiquitin. Required for the stability and translation of a subset mRNAs with a high abundance of rare codons by mediating deubiquitination of 40S ribosomal protein RPS10/eS10, thereby antagonizing ZNF598-mediated 40S ubiquitination. The abundance of rare codons in mRNAs can limit the translation rate and can lead to ribosome collisions that trigger activation of ribosome quality control (RQC) pathway by ZNF598. OTUD1-mediated deubiquitination prevents activation of the RQC and subsequent dissociation of ribosomes and stimulates formation of polysomes and translation. The sequence is that of OTU domain-containing protein 1 (Otud1) from Mus musculus (Mouse).